The primary structure comprises 134 residues: MKNFKVTVNGTEYDVAVEEMGGAAVASAPAARPAAAPAPAAPKPAAAPAPAPAPKTTAAGAGAGANTVTAPMPGTILNVGCHAGDKVSKGDTLVVLEAMKMENEIMAPHDGVVSEVRVQQGASVNAGDILVVLS.

The span at 28 to 38 shows a compositional bias: low complexity; the sequence is APAARPAAAPA. A disordered region spans residues 28-67; the sequence is APAARPAAAPAPAAPKPAAAPAPAPAPKTTAAGAGAGANT. Over residues 39 to 53 the composition is skewed to pro residues; it reads PAAPKPAAAPAPAPA. Over residues 54–67 the composition is skewed to low complexity; sequence PKTTAAGAGAGANT. The region spanning 58-134 is the Biotinyl-binding domain; it reads AAGAGAGANT…NAGDILVVLS (77 aa). Lysine 100 bears the N6-biotinyllysine mark.

The methylmalonyl-CoA decarboxylase is composed of four subunits: the carboxyltransferase alpha subunit (MmdA), the tunnel beta subunit (MmdB), the biotin-containing gamma subunit (MmdC) and the delta subunit (MmdD). The cofactor is biotin.

It is found in the cell membrane. The catalysed reaction is (S)-methylmalonyl-CoA + Na(+)(in) + H(+)(out) = propanoyl-CoA + Na(+)(out) + CO2. Its function is as follows. Biotin-containing subunit of the sodium ion pump methylmalonyl-CoA decarboxylase, which converts the chemical energy of a decarboxylation reaction into an electrochemical gradient of Na(+) ions across the cytoplasmic membrane, thereby creating a sodium ion motive force that is used for ATP synthesis. This Propionigenium modestum protein is Methylmalonyl-CoA decarboxylase subunit gamma.